A 203-amino-acid polypeptide reads, in one-letter code: Outer-membrane lipoprotein LolB (203 aa).

Positions 1–22 (MPVNLNHTLLLCLLVAASLLSG) are cleaved as a signal peptide. Residue cysteine 23 is the site of N-palmitoyl cysteine attachment. Cysteine 23 carries S-diacylglycerol cysteine lipidation.

It belongs to the LolB family. As to quaternary structure, monomer.

It is found in the cell outer membrane. Its function is as follows. Plays a critical role in the incorporation of lipoproteins in the outer membrane after they are released by the LolA protein. This Shewanella denitrificans (strain OS217 / ATCC BAA-1090 / DSM 15013) protein is Outer-membrane lipoprotein LolB.